The sequence spans 423 residues: Mannose-6-phosphate isomerase (423 aa).

N-acetylalanine is present on A2. Phosphoserine occurs at positions 102 and 108. Zn(2+) is bound by residues Q110, H112, E137, and H276. The active site involves R295.

Belongs to the mannose-6-phosphate isomerase type 1 family. It depends on Zn(2+) as a cofactor.

The protein localises to the cytoplasm. It carries out the reaction D-mannose 6-phosphate = D-fructose 6-phosphate. It functions in the pathway nucleotide-sugar biosynthesis; GDP-alpha-D-mannose biosynthesis; alpha-D-mannose 1-phosphate from D-fructose 6-phosphate: step 1/2. In terms of biological role, isomerase that catalyzes the interconversion of fructose-6-P and mannose-6-P and has a critical role in the supply of D-mannose derivatives required for many eukaryotic glycosylation reactions. This is Mannose-6-phosphate isomerase (MPI) from Macaca fascicularis (Crab-eating macaque).